The primary structure comprises 202 residues: NADH-quinone oxidoreductase subunit B 2 (202 aa).

[4Fe-4S] cluster contacts are provided by Cys38, Cys39, Cys104, and Cys133.

Belongs to the complex I 20 kDa subunit family. In terms of assembly, NDH-1 is composed of 14 different subunits. Subunits NuoB, C, D, E, F, and G constitute the peripheral sector of the complex. [4Fe-4S] cluster is required as a cofactor.

The protein localises to the cell inner membrane. The enzyme catalyses a quinone + NADH + 5 H(+)(in) = a quinol + NAD(+) + 4 H(+)(out). Its function is as follows. NDH-1 shuttles electrons from NADH, via FMN and iron-sulfur (Fe-S) centers, to quinones in the respiratory chain. The immediate electron acceptor for the enzyme in this species is believed to be ubiquinone. Couples the redox reaction to proton translocation (for every two electrons transferred, four hydrogen ions are translocated across the cytoplasmic membrane), and thus conserves the redox energy in a proton gradient. This Koribacter versatilis (strain Ellin345) protein is NADH-quinone oxidoreductase subunit B 2.